The sequence spans 49 residues: Toxic protein HokB (49 aa).

The helical transmembrane segment at 4 to 24 (NPLVVCLLIICITILTFTLLT) threads the bilayer.

This sequence belongs to the Hok/Gef family.

It localises to the cell inner membrane. Functionally, toxic component of a type I toxin-antitoxin (TA) system. When overexpressed kills cells within minutes; causes collapse of the transmembrane potential and arrest of respiration. Expression leads to membrane depolarization; when protein levels are high enough depolarization probably leads to lowered metabolic activity which in turn induces some cells to enter the persistent state in which they transiently survive antibiotic exposure. Its toxic effect is probably neutralized by antisense antitoxin RNA SokB, which is encoded in trans on the opposite DNA strand. This is Toxic protein HokB from Escherichia coli (strain K12).